The primary structure comprises 674 residues: Zinc finger protein 750 (674 aa).

The segment at 25–51 (YKCFQCPFTCNEKSHLFNHMKYGLCKN) adopts a CCHC-type zinc-finger fold. Residues Cys27, Cys30, His43, and Cys49 each coordinate Zn(2+). Disordered regions lie at residues 105–125 (EAKE…KTTV), 370–466 (LAKN…QSHS), and 594–674 (TSSP…PRVS). Polar residues-rich tracts occupy residues 401–411 (SPTNFTQSSQG) and 444–466 (DSQT…QSHS).

The protein resides in the nucleus. Transcription factor involved in epidermis differentiation. This chain is Zinc finger protein 750 (znf750), found in Xenopus laevis (African clawed frog).